The sequence spans 511 residues: Nucleolar protein 58 (511 aa).

A Glycyl lysine isopeptide (Lys-Gly) (interchain with G-Cter in ubiquitin) cross-link involves residue K281. In terms of domain architecture, Nop spans 283-403; sequence IAPNLTQLVG…VENRLSQLEG (121 aa). Residues 423–511 are disordered; it reads EARAYNADAD…KSKKEKKEKK (89 aa). A coiled-coil region spans residues 435–511; it reads KAASDSESDS…KSKKEKKEKK (77 aa). Residues 440-450 show a composition bias toward acidic residues; that stretch reads SESDSDDEEEE. Positions 471 to 511 are enriched in basic residues; the sequence is KKAKKEKKDKKEKKEKKEKKEKKEKKEKKEKKSKKEKKEKK.

It belongs to the NOP5/NOP56 family. Interacts with SIK1/NOP56 and NOP1. Interacts with the trimethylguanosine synthase TGS1. Component of the ribosomal small subunit (SSU) processome composed of at least 40 protein subunits and snoRNA U3.

It localises to the nucleus. The protein resides in the nucleolus. Its function is as follows. Required for pre-18S rRNA processing. May bind microtubules. The protein is Nucleolar protein 58 (NOP58) of Saccharomyces cerevisiae (strain ATCC 204508 / S288c) (Baker's yeast).